Consider the following 373-residue polypeptide: Chorismate synthase (373 aa).

NADP(+) is bound at residue Arg-46. FMN is bound by residues 123–125 (RSS), 251–252 (NA), Gly-295, 310–314 (KPTPS), and Arg-337.

This sequence belongs to the chorismate synthase family. FMNH2 is required as a cofactor.

It catalyses the reaction 5-O-(1-carboxyvinyl)-3-phosphoshikimate = chorismate + phosphate. Its pathway is metabolic intermediate biosynthesis; chorismate biosynthesis; chorismate from D-erythrose 4-phosphate and phosphoenolpyruvate: step 7/7. Its function is as follows. Catalyzes the anti-1,4-elimination of the C-3 phosphate and the C-6 proR hydrogen from 5-enolpyruvylshikimate-3-phosphate (EPSP) to yield chorismate, which is the branch point compound that serves as the starting substrate for the three terminal pathways of aromatic amino acid biosynthesis. This reaction introduces a second double bond into the aromatic ring system. The polypeptide is Chorismate synthase (Methanococcus maripaludis (strain C7 / ATCC BAA-1331)).